The primary structure comprises 233 residues: Adenosylcobinamide-GDP ribazoletransferase (233 aa).

Transmembrane regions (helical) follow at residues L24–L44, L46–L66, I96–V116, P117–A137, S156–Y176, L184–I204, and I209–A229.

Belongs to the CobS family. Requires Mg(2+) as cofactor.

It localises to the cell membrane. It catalyses the reaction alpha-ribazole + adenosylcob(III)inamide-GDP = adenosylcob(III)alamin + GMP + H(+). It carries out the reaction alpha-ribazole 5'-phosphate + adenosylcob(III)inamide-GDP = adenosylcob(III)alamin 5'-phosphate + GMP + H(+). It participates in cofactor biosynthesis; adenosylcobalamin biosynthesis; adenosylcobalamin from cob(II)yrinate a,c-diamide: step 7/7. Functionally, joins adenosylcobinamide-GDP and alpha-ribazole to generate adenosylcobalamin (Ado-cobalamin). Also synthesizes adenosylcobalamin 5'-phosphate from adenosylcobinamide-GDP and alpha-ribazole 5'-phosphate. The polypeptide is Adenosylcobinamide-GDP ribazoletransferase (Thermococcus onnurineus (strain NA1)).